Reading from the N-terminus, the 184-residue chain is dCTP deaminase (184 aa).

Residue 107–112 participates in dCTP binding; the sequence is KSTYAR. The Proton donor/acceptor role is filled by Glu-133. DCTP-binding residues include Gln-152, Tyr-166, and Gln-176.

Belongs to the dCTP deaminase family. Homotrimer.

It carries out the reaction dCTP + H2O + H(+) = dUTP + NH4(+). The protein operates within pyrimidine metabolism; dUMP biosynthesis; dUMP from dCTP (dUTP route): step 1/2. Its function is as follows. Catalyzes the deamination of dCTP to dUTP. This Acidiphilium cryptum (strain JF-5) protein is dCTP deaminase.